The sequence spans 942 residues: Exopolysaccharide phosphotransferase SCO2592 (942 aa).

It belongs to the stealth family.

This is Exopolysaccharide phosphotransferase SCO2592 from Streptomyces coelicolor (strain ATCC BAA-471 / A3(2) / M145).